Here is a 524-residue protein sequence, read N- to C-terminus: MAVPTNSCLLVCLLTLTVLQLPTLDSAAPFDVTAPQEPVLALVGSDAELTCGFSPNASSEYMELLWFRQTRSTAVLLYRDGQEQEGQQMTEYRGRATLATAGLLDGRATLLIRDVRVSDQGEYRCLFKDNDDFEEAAVYLKVAAVGSDPQISMTVQENGEMELECTSSGWYPEPQVQWRTGNREMLPSTSESKKHNEEGLFTVAVSMMIRDSSIKNMSCCIQNILLGQGKEVEISLPAPFVPRLTPWIVAVAIILLALGFLTIGSIFFTWKLYKERSSLRKKEFGSKERLLEELRCKKTVLHEVDVTLDPDTAHPHLFLYEDSKSVRLEDSRQILPDRPERFDSWPCVLGRETFTSGRHYWEVEVGDRTDWAIGVCRENVVKKGFDPMTPDNGFWAVELYGNGYWALTPLRTSLRLAGPPRRVGVFLDYDAGDISFYNMSNGSLIYTFPSISFSGPLRPFFCLWSCGKKPLTICSTANGPEKVTVIANVQDDIPLSPLGEGCTSGDKDTLHSKLIPFSPSQAAP.

The N-terminal stretch at 1-26 (MAVPTNSCLLVCLLTLTVLQLPTLDS) is a signal peptide. The Extracellular segment spans residues 27–247 (AAPFDVTAPQ…APFVPRLTPW (221 aa)). Ig-like V-type domains are found at residues 29-141 (PFDV…VYLK) and 149-235 (PQIS…VEIS). Intrachain disulfides connect Cys-51–Cys-125 and Cys-165–Cys-219. Residues Asn-56 and Asn-216 are each glycosylated (N-linked (GlcNAc...) asparagine). Residues 248–268 (IVAVAIILLALGFLTIGSIFF) form a helical membrane-spanning segment. The Cytoplasmic portion of the chain corresponds to 269 to 524 (TWKLYKERSS…IPFSPSQAAP (256 aa)). Positions 286–480 (SKERLLEELR…LTICSTANGP (195 aa)) constitute a B30.2/SPRY domain.

It belongs to the immunoglobulin superfamily. BTN/MOG family. Seems to associate with xanthine dehydrogenase/oxidase. N-glycosylated. In terms of tissue distribution, strongly expressed in lactating mammary tissue (at protein level). About 100-fold lower levels in virgin mammary tissue. Also detected in spleen and thymus at 10-20 times lower levels compared to those detected in virgin mammary gland. Very low levels in several other tissues, including brain, heart, kidney, lymph node, lung and small intestine. In the thymus, detected in the stroma, in epithelial cells (at protein level). Most prominent in medullary areas of the thymus and at the corticomedullary junction (at protein level).

The protein resides in the membrane. Its function is as follows. May function in the secretion of milk-fat droplets. May act as a specific membrane-associated receptor for the association of cytoplasmic droplets with the apical plasma membrane. Inhibits the proliferation of CD4 and CD8 T-cells activated by anti-CD3 antibodies, T-cell metabolism and IL2 and IFNG secretion. In Mus musculus (Mouse), this protein is Butyrophilin subfamily 1 member A1 (Btn1a1).